Reading from the N-terminus, the 339-residue chain is MFDSVKIAWLVALGAAQVAATALPAFNVNPNSVSVSGLSSGGYMAAQLGVAYSDVFNVGFGVFAGGPYDCARNQYYTSCMYNGYPSITTPTANMKSWSGNQIASVANLGQRKIYMWTGSSDTTVGPNVMNQLKAQLGNFDNSANVSYVTTTGAVHTFPTDFNGAGDNSCSLSTSPYISNCNYDGAGAALKWIYGSLNARNTGTLSGSVLSFAQSGSYGANGMDTTGYLYVPQSCASGATVCSLHVALHGCLQSYSSIGSRFIQNTGYNKWADTNNMIILYPQAIPDYTIHAIWNGGVLSNPNGCWDWVGWYGSNADQIGGVQMAAIVGQVKQIVSGFQG.

The signal sequence occupies residues 1-20 (MFDSVKIAWLVALGAAQVAA). The active site involves serine 39. The cysteines at positions 70 and 79 are disulfide-linked. Aspartate 121 is an active-site residue. An N-linked (GlcNAc...) asparagine glycan is attached at asparagine 144. Histidine 155 is an active-site residue. Intrachain disulfides connect cysteine 169/cysteine 180, cysteine 234/cysteine 241, and cysteine 250/cysteine 304. Position 307 (tryptophan 307) interacts with (3R)-hydroxybutanoate trimer.

Belongs to the carbohydrate esterase 1 (CE1) family.

It localises to the secreted. The enzyme catalyses [(3R)-hydroxybutanoate](n) + H2O = [(3R)-hydroxybutanoate](n-1) + (R)-3-hydroxybutanoate + H(+). With respect to regulation, the enzyme is completely inhibited by dithiothreitol (DTT) and diisopropylfluorophosphate (DFP), and partially inhibited by HgCl(2) and by enzyme3-(p-nitrophenoxy)propane (EPNP). Activity is not affected by N-ethylmaleimide (NEM) or phenylmethylsulfonyl fluoride (PMSF). Functionally, esterase involved in the hydrolysis of polyhydroxybutyrate, a microbial polyester that can be produced from renewable resources. In Talaromyces funiculosus (Fruitlet core rot fungus), this protein is Polyhydroxybutyrate depolymerase.